The following is a 194-amino-acid chain: Peptidyl-tRNA hydrolase (194 aa).

Tyr-17 is a tRNA binding site. His-22 (proton acceptor) is an active-site residue. TRNA contacts are provided by Phe-68, Asn-70, and Asn-116.

It belongs to the PTH family. Monomer.

Its subcellular location is the cytoplasm. The catalysed reaction is an N-acyl-L-alpha-aminoacyl-tRNA + H2O = an N-acyl-L-amino acid + a tRNA + H(+). Its function is as follows. Hydrolyzes ribosome-free peptidyl-tRNAs (with 1 or more amino acids incorporated), which drop off the ribosome during protein synthesis, or as a result of ribosome stalling. Catalyzes the release of premature peptidyl moieties from peptidyl-tRNA molecules trapped in stalled 50S ribosomal subunits, and thus maintains levels of free tRNAs and 50S ribosomes. The polypeptide is Peptidyl-tRNA hydrolase (Mannheimia succiniciproducens (strain KCTC 0769BP / MBEL55E)).